The chain runs to 329 residues: Peroxidase 18 (329 aa).

The first 29 residues, 1–29 (MALQFFSCKPKYTFLSSLLLLLLLSSSVA), serve as a signal peptide directing secretion. Cystine bridges form between Cys40-Cys116, Cys73-Cys78, Cys122-Cys325, and Cys201-Cys235. His71 acts as the Proton acceptor in catalysis. 5 residues coordinate Ca(2+): Asp72, Val75, Gly77, Asp79, and Ser81. Asn87 is a glycosylation site (N-linked (GlcNAc...) asparagine). Ile164 lines the substrate pocket. Residue His194 coordinates heme b. Thr195 is a Ca(2+) binding site. Ca(2+) is bound by residues Asp249, Thr252, and Asp257.

The protein belongs to the peroxidase family. Classical plant (class III) peroxidase subfamily. Heme b is required as a cofactor. It depends on Ca(2+) as a cofactor.

Its subcellular location is the secreted. The catalysed reaction is 2 a phenolic donor + H2O2 = 2 a phenolic radical donor + 2 H2O. In terms of biological role, removal of H(2)O(2), oxidation of toxic reductants, biosynthesis and degradation of lignin, suberization, auxin catabolism, response to environmental stresses such as wounding, pathogen attack and oxidative stress. These functions might be dependent on each isozyme/isoform in each plant tissue. This is Peroxidase 18 (PER18) from Arabidopsis thaliana (Mouse-ear cress).